The primary structure comprises 142 residues: MFLGTHTPRLDDKGRLILPAKFRDELAGGVVITKGQERCLYVFPTPEFQHIADQLRAQPMTHKAARAYSRVFFASAHDEVPDKQGRVTIPGHLREYAALDRDLVVIGAHTRVEIWDRVAWESYLAESEDEFADIEEGVLPGL.

2 consecutive SpoVT-AbrB domains span residues 5-47 and 76-119; these read THTP…PTPE and AHDE…DRVA.

The protein belongs to the MraZ family. In terms of assembly, forms oligomers.

The protein localises to the cytoplasm. It localises to the nucleoid. The polypeptide is Transcriptional regulator MraZ (Salinispora tropica (strain ATCC BAA-916 / DSM 44818 / JCM 13857 / NBRC 105044 / CNB-440)).